The chain runs to 1189 residues: Pumilio homolog 1 (1189 aa).

5 disordered regions span residues 24-65 (QHAQ…SSPV), 233-288 (SCLR…QNGI), 491-525 (QQTTQQTQQGQQQVLRGGASQRPLTPNQNQQGQQT), 614-652 (AGTTNGPFRPLGTQQPQPQPQQQPTNNLASSSFYGNNSL), and 743-774 (GPVGMPLPSQGPGHSQTPPPSLSSHGSSSSLN). Over residues 45–58 (QAQPQPAANQALAA) the composition is skewed to low complexity. Basic and acidic residues predominate over residues 250 to 277 (NDKGDKKNKGTFDGDKLGDLKEEGDVMD). Positions 491–503 (QQTTQQTQQGQQQ) are enriched in low complexity. The segment covering 512 to 525 (RPLTPNQNQQGQQT) has biased composition (polar residues). Low complexity-rich tracts occupy residues 627-652 (QQPQPQPQQQPTNNLASSSFYGNNSL) and 764-774 (LSSHGSSSSLN). The 343-residue stretch at 829-1171 (GRSRLLEDFR…HILAKLEKYY (343 aa)) folds into the PUM-HD domain. 8 Pumilio repeats span residues 849–884 (EIAGHIMEFSQDQHGSRFIQLKLERATPAERQLVFN), 885–920 (EILQAAYQLMVDVFGNYVIQKFFEFGSLEQKLALAE), 921–958 (RIRGHVLSLALQMYGCRVIQKALEFIPPDQQVINEMVR), 959–994 (ELDGHVLKCVKDQNGNHVVQKCIECVQPQSLQFIID), 995–1030 (AFKGQVFALSTHPYGCRVIQRILEHCLPEQTLPILE), 1031–1066 (ELHQHTEQLVQDQYGNYVIQHVLEHGRPEDKSKIVA), 1067–1102 (EIRGNVLVLSQHKFASNVVEKCVTHASRTERAMLID), and 1106–1145 (TMNDGPHSALYTMMKDQYANYVVQKMIDVAEPAQRKIVMH). The interval 864 to 868 (SRFIQ) is adenine-nucleotide binding in RNA target. The segment at 900–904 (NYVIQ) is uracil-nucleotide binding in RNA target. The adenine-nucleotide binding in RNA target stretch occupies residues 936-940 (CRVIQ). The interval 974–978 (NHVVQ) is non-specific-nucleotide binding in RNA target. Positions 1010–1014 (CRVIQ) are adenine-nucleotide binding in RNA target. The segment at 1046-1050 (NYVIQ) is uracil-nucleotide binding in RNA target. Guanine-nucleotide binding in RNA target regions lie at residues 1082–1086 (SNVVE) and 1083–1086 (NVVE). Positions 1125-1129 (NYVVQ) are uracil-nucleotide binding in RNA target.

Detected in embryonic male and female gonads, heart, liver and muscle. Detected in adult brain, testis, ovary, heart, lung, spleen, kidney and muscle.

The protein localises to the cytoplasm. Its subcellular location is the P-body. It is found in the cytoplasmic granule. Its function is as follows. Sequence-specific RNA-binding protein that acts as a post-transcriptional repressor by binding the 3'-UTR of mRNA targets. Binds to an RNA consensus sequence, the Pumilio Response Element (PRE), 5'-UGUANAUA-3', that is related to the Nanos Response Element (NRE). Mediates post-transcriptional repression of transcripts via different mechanisms: acts via direct recruitment of the CCR4-POP2-NOT deadenylase leading to translational inhibition and mRNA degradation. Also mediates deadenylation-independent repression by promoting accessibility of miRNAs. This Gallus gallus (Chicken) protein is Pumilio homolog 1 (PUM1).